We begin with the raw amino-acid sequence, 149 residues long: Transcriptional regulator MraZ (149 aa).

SpoVT-AbrB domains are found at residues K7 to H54 and A83 to N126.

This sequence belongs to the MraZ family. In terms of assembly, forms oligomers.

It localises to the cytoplasm. The protein localises to the nucleoid. The protein is Transcriptional regulator MraZ of Rickettsia conorii (strain ATCC VR-613 / Malish 7).